A 72-amino-acid chain; its full sequence is DNA-directed RNA polymerase subunit omega (72 aa).

The protein belongs to the RNA polymerase subunit omega family. The RNAP catalytic core consists of 2 alpha, 1 beta, 1 beta' and 1 omega subunit. When a sigma factor is associated with the core the holoenzyme is formed, which can initiate transcription.

It catalyses the reaction RNA(n) + a ribonucleoside 5'-triphosphate = RNA(n+1) + diphosphate. Its function is as follows. Promotes RNA polymerase assembly. Latches the N- and C-terminal regions of the beta' subunit thereby facilitating its interaction with the beta and alpha subunits. This Clostridium tetani (strain Massachusetts / E88) protein is DNA-directed RNA polymerase subunit omega (rpoZ).